The primary structure comprises 302 residues: Protein FdhE homolog (302 aa).

Belongs to the FdhE family.

The protein resides in the cytoplasm. Necessary for formate dehydrogenase activity. This chain is Protein FdhE homolog, found in Shewanella oneidensis (strain ATCC 700550 / JCM 31522 / CIP 106686 / LMG 19005 / NCIMB 14063 / MR-1).